The primary structure comprises 901 residues: Serine/threonine-protein kinase-like protein CR4 (901 aa).

A signal peptide spans 1–22 (MDIVPVVALCCCLVLLPSWAYG). A run of 7 repeats spans residues 31–66 (VSYGEDGPVFCGLNSDGSHLVTCFGADASVVYGAPS), 70–105 (FVGVTAGDGFACGLLLDTNQPYCWGSNSYVKIGVPQ), 123–158 (LCALRTSVKGFHSVNGDTSVIDCWGYNMTATHTVTG), 160–193 (VSAISAGSVFNCGLFARNRTVFCWGDESVSGVIG), 201–234 (FQSIGAGGYHVCGVLENAQVFCWGRSLEMQQMST), 251–285 (MVSVVGGRFHACGIRSLDHQVACWGFTLQNSTLAP), and 290–328 (VYAIVAGDYFTCGVPAETSLKPMCWGHSGPLALPMAVSP). The tract at residues 31-328 (VSYGEDGPVF…PLALPMAVSP (298 aa)) is 7 X 36 AA repeats. 2 N-linked (GlcNAc...) asparagine glycosylation sites follow: asparagine 149 and asparagine 177. N-linked (GlcNAc...) asparagine glycosylation occurs at asparagine 280. The TNFR-Cys repeat unit spans residues 335–389 (SCSHGYYEYANHGEVGSGSKTCKPANSRLCLPCSVGCPDDSYESSPCNATADRVC). 3 disulfides stabilise this stretch: cysteine 336–cysteine 364, cysteine 367–cysteine 381, and cysteine 371–cysteine 389. N-linked (GlcNAc...) asparagine glycosylation occurs at asparagine 382. A helical transmembrane segment spans residues 423–443 (IFVAEIAFAVILVFSVTAIAC). Positions 504 to 781 (FSEDSQVGKG…KVTTALERAL (278 aa)) constitute a Protein kinase domain. ATP-binding positions include 510–518 (VGKGSFSCV) and lysine 532. Residue aspartate 633 is the Proton acceptor of the active site. Residues 845–901 (VTSSQRRKSSASEADMDGRTTTDGRNVGSSIGDGLRSLEEEISPASPQENLYLQHNF) are disordered. A compositionally biased stretch (polar residues) spans 889 to 901 (ASPQENLYLQHNF).

The protein belongs to the protein kinase superfamily. Ser/Thr protein kinase family. In terms of assembly, homodimer. Post-translationally, autophosphorylated. Specifically expressed in the epidermal cells of paleas and lemmas.

Its subcellular location is the cell membrane. It is found in the endosome. It localises to the multivesicular body membrane. The enzyme catalyses L-seryl-[protein] + ATP = O-phospho-L-seryl-[protein] + ADP + H(+). It carries out the reaction L-threonyl-[protein] + ATP = O-phospho-L-threonyl-[protein] + ADP + H(+). Receptor protein kinase. Could play a role in a differentiation signal. Controls formative cell division in meristems. Regulates epidermal cell differentiation in many organs. During floral organogenesis, required to maintain the interlocking of the palea and lemma, and fertility. Triggers culm elongation. The sequence is that of Serine/threonine-protein kinase-like protein CR4 from Oryza sativa subsp. japonica (Rice).